The following is a 137-amino-acid chain: Small ribosomal subunit protein uS12 (137 aa).

The segment at 1–25 (MPTINQLVRQGRKSKTYKSDSPALS) is disordered. Asp-102 carries the 3-methylthioaspartic acid modification.

Belongs to the universal ribosomal protein uS12 family. In terms of assembly, part of the 30S ribosomal subunit. Contacts proteins S8 and S17. May interact with IF1 in the 30S initiation complex.

Its function is as follows. With S4 and S5 plays an important role in translational accuracy. Interacts with and stabilizes bases of the 16S rRNA that are involved in tRNA selection in the A site and with the mRNA backbone. Located at the interface of the 30S and 50S subunits, it traverses the body of the 30S subunit contacting proteins on the other side and probably holding the rRNA structure together. The combined cluster of proteins S8, S12 and S17 appears to hold together the shoulder and platform of the 30S subunit. The polypeptide is Small ribosomal subunit protein uS12 (Finegoldia magna (strain ATCC 29328 / DSM 20472 / WAL 2508) (Peptostreptococcus magnus)).